Reading from the N-terminus, the 396-residue chain is NADH-quinone oxidoreductase subunit D 1 (396 aa).

This sequence belongs to the complex I 49 kDa subunit family. NDH-1 is composed of 14 different subunits. Subunits NuoB, C, D, E, F, and G constitute the peripheral sector of the complex.

The protein resides in the cell inner membrane. The enzyme catalyses a quinone + NADH + 5 H(+)(in) = a quinol + NAD(+) + 4 H(+)(out). NDH-1 shuttles electrons from NADH, via FMN and iron-sulfur (Fe-S) centers, to quinones in the respiratory chain. The immediate electron acceptor for the enzyme in this species is believed to be ubiquinone. Couples the redox reaction to proton translocation (for every two electrons transferred, four hydrogen ions are translocated across the cytoplasmic membrane), and thus conserves the redox energy in a proton gradient. The chain is NADH-quinone oxidoreductase subunit D 1 from Nitrobacter hamburgensis (strain DSM 10229 / NCIMB 13809 / X14).